Here is a 740-residue protein sequence, read N- to C-terminus: ATP-dependent RNA helicase DDX1 (740 aa).

The tract at residues 1-295 is necessary for interaction with HNRNPK; the sequence is MAAFSEMGVM…APKALIVEPS (295 aa). The segment at 1–448 is interaction with dsRNA; that stretch reads MAAFSEMGVM…DTVHHVVVPV (448 aa). The necessary for interaction with RELA stretch occupies residues 1 to 525; that stretch reads MAAFSEMGVM…KIDCDNLEQY (525 aa). Positions 2-428 constitute a Helicase ATP-binding domain; the sequence is AAFSEMGVMP…SEKIMHFPTW (427 aa). Residue 46–53 participates in ATP binding; that stretch reads AETGSGKT. In terms of domain architecture, B30.2/SPRY spans 70 to 247; that stretch reads DQQEGKKGKA…LKFNFGEEEF (178 aa). Residues Lys239 and Lys268 each carry the N6-acetyllysine modification. Residue Lys281 is modified to N6-acetyllysine; alternate. Residue Lys281 forms a Glycyl lysine isopeptide (Lys-Gly) (interchain with G-Cter in SUMO2); alternate linkage. A DEAD box motif is present at residues 370–373; it reads DEAD. The residue at position 481 (Ser481) is a Phosphoserine. The region spanning 493–681 is the Helicase C-terminal domain; sequence KGEYAVRAIK…QVEPDIKVPV (189 aa). The necessary for interaction with HNRNPK stretch occupies residues 525–740; it reads YFMQQGGGPD…YLPNQLFRTF (216 aa).

The protein belongs to the DEAD box helicase family. DDX1 subfamily. Found in a multi-helicase-TICAM1 complex at least composed of DHX36, DDX1, DDX21 and TICAM1; this complex exists in resting cells with or without poly(I:C) RNA ligand stimulation. Interacts with DHX36. Interacts (via B30.2/SPRY domain) with DDX21 (via N-terminus); this interaction serves as bridges to TICAM1. Interacts with FAM98A (via N- and C-terminus). Interacts with PHF5A (via C-terminus). Interacts with MBNL1. Interacts with CSTF2. Interacts with HNRNPK. Interacts with ATM. Interacts with RELA (via C-terminus). Component of the tRNA-splicing ligase complex. Interacts with PQBP1. Interacts with ERCC6. Phosphorylated by ATM kinase; phosphorylation is increased in response to ionizing radiation (IR).

The protein resides in the nucleus. Its subcellular location is the cytoplasm. It is found in the cytoplasmic granule. It localises to the cytosol. The protein localises to the mitochondrion. The catalysed reaction is ATP + H2O = ADP + phosphate + H(+). In terms of biological role, acts as an ATP-dependent RNA helicase, able to unwind both RNA-RNA and RNA-DNA duplexes. Possesses 5' single-stranded RNA overhang nuclease activity. Possesses ATPase activity on various RNA, but not DNA polynucleotides. May play a role in RNA clearance at DNA double-strand breaks (DSBs), thereby facilitating the template-guided repair of transcriptionally active regions of the genome. Together with RELA, acts as a coactivator to enhance NF-kappa-B-mediated transcriptional activation. Acts as a positive transcriptional regulator of cyclin CCND2 expression. Binds to the cyclin CCND2 promoter region. Associates with chromatin at the NF-kappa-B promoter region via association with RELA. Binds to poly(A) RNA. May be involved in 3'-end cleavage and polyadenylation of pre-mRNAs. Component of the tRNA-splicing ligase complex required to facilitate the enzymatic turnover of catalytic subunit RTCB: together with archease (ZBTB8OS), acts by facilitating the guanylylation of RTCB, a key intermediate step in tRNA ligation. Component of a multi-helicase-TICAM1 complex that acts as a cytoplasmic sensor of viral double-stranded RNA (dsRNA) and plays a role in the activation of a cascade of antiviral responses including the induction of pro-inflammatory cytokines via the adapter molecule TICAM1. Specifically binds (via helicase ATP-binding domain) on both short and long poly(I:C) dsRNA. This is ATP-dependent RNA helicase DDX1 (DDX1) from Bos taurus (Bovine).